Consider the following 390-residue polypeptide: Na(+)/H(+) antiporter NhaA 2 (390 aa).

The next 11 membrane-spanning stretches (helical) occupy residues 23–43 (IVLI…LAAA), 63–83 (LHLW…GLEI), 100–120 (LPVL…LAIT), 129–149 (GWAI…ALVG), 158–178 (LFLL…IALF), 181–201 (SGLK…LVLV), 208–228 (ALLP…HSGI), 265–285 (GFVI…GADF), 293–313 (LGIA…SILV), 331–351 (LWGI…IAGL), and 362–382 (EAKL…LLVL).

This sequence belongs to the NhaA Na(+)/H(+) (TC 2.A.33) antiporter family.

The protein localises to the cell inner membrane. The catalysed reaction is Na(+)(in) + 2 H(+)(out) = Na(+)(out) + 2 H(+)(in). Na(+)/H(+) antiporter that extrudes sodium in exchange for external protons. This is Na(+)/H(+) antiporter NhaA 2 from Novosphingobium aromaticivorans (strain ATCC 700278 / DSM 12444 / CCUG 56034 / CIP 105152 / NBRC 16084 / F199).